The sequence spans 465 residues: Soluble pyridine nucleotide transhydrogenase (465 aa).

36 to 45 (ERYDNVGGGC) contributes to the FAD binding site.

The protein belongs to the class-I pyridine nucleotide-disulfide oxidoreductase family. FAD serves as cofactor.

It localises to the cytoplasm. The catalysed reaction is NAD(+) + NADPH = NADH + NADP(+). Functionally, conversion of NADPH, generated by peripheral catabolic pathways, to NADH, which can enter the respiratory chain for energy generation. This Sodalis glossinidius (strain morsitans) protein is Soluble pyridine nucleotide transhydrogenase.